We begin with the raw amino-acid sequence, 191 residues long: Putative manganese efflux pump MntP (191 aa).

A run of 6 helical transmembrane segments spans residues proline 3 to glycine 23, leucine 37 to leucine 57, valine 65 to isoleucine 85, tryptophan 107 to phenylalanine 129, cysteine 144 to glycine 164, and isoleucine 169 to glycine 189.

It belongs to the MntP (TC 9.B.29) family.

Its subcellular location is the cell inner membrane. Functionally, probably functions as a manganese efflux pump. This is Putative manganese efflux pump MntP from Stenotrophomonas maltophilia (strain K279a).